The following is a 141-amino-acid chain: Hemoglobin subunit alpha-1 (141 aa).

A Globin domain is found at Val1 to Arg141. His58 contacts O2. His87 contributes to the heme b binding site.

It belongs to the globin family. Heterotetramer of two alpha chains and two beta chains. Red blood cells.

Involved in oxygen transport from the lung to the various peripheral tissues. The protein is Hemoglobin subunit alpha-1 of Naja naja (Indian cobra).